A 582-amino-acid chain; its full sequence is ABC transporter-like protein ECU11_1340 (582 aa).

The ABC transporter domain maps to 15-257 (VPNQNLSSNE…LGTKGIHNDG (243 aa)). 47-54 (GTSGSGKT) is an ATP binding site. An ABC transmembrane type-2 domain is found at 316-519 (YVSFQMAIRQ…EIDAFISNFF (204 aa)). The next 6 helical transmembrane spans lie at 335-355 (ILYS…GKYI), 359-378 (FSIA…YVMN), 412-432 (TLVS…FGLI), 436-456 (HAFL…SMLF), 482-502 (GALL…SVIP), and 551-571 (SFLR…SSIL).

Belongs to the ABC transporter superfamily.

Its subcellular location is the membrane. The chain is ABC transporter-like protein ECU11_1340 from Encephalitozoon cuniculi (strain GB-M1) (Microsporidian parasite).